Here is a 465-residue protein sequence, read N- to C-terminus: Serine/threonine-protein kinase AtPK1/AtPK6 (465 aa).

The short motif at 91–96 (LVECLE) is the LVxCxE motif element. In terms of domain architecture, Protein kinase spans 134-389 (FEVMKVVGKG…AEEIKQHKWF (256 aa)). ATP-binding positions include 140 to 148 (VGKGAFGKV) and Lys-163. Catalysis depends on Asp-257, which acts as the Proton acceptor. The segment at 275-301 (DFGLAKEFEENTRSNSMCGTTEYMAPE) is activation loop. At Ser-290 the chain carries Phosphoserine; by PDPK1. Positions 390 to 460 (KGINWKKLEA…VRPPPSFLHQ (71 aa)) constitute an AGC-kinase C-terminal domain. Thr-449 bears the Phosphothreonine; by TOR mark.

The protein belongs to the protein kinase superfamily. AGC Ser/Thr protein kinase family. S6 kinase subfamily. As to quaternary structure, interacts with RAPTOR1. Interacts with RBR1-E2FB complex through its LVxCxE motif. Interacts with TAP46. Binds to MRF1. Undergoes serine-specific autophosphorylation. Phosphorylated at Thr-449 by TOR. In terms of tissue distribution, expressed in all tissues.

Its subcellular location is the cytoplasm. It localises to the nucleus. It catalyses the reaction L-seryl-[protein] + ATP = O-phospho-L-seryl-[protein] + ADP + H(+). The catalysed reaction is L-threonyl-[protein] + ATP = O-phospho-L-threonyl-[protein] + ADP + H(+). With respect to regulation, activated by PDK1. Repressed during osmotic stress. Its function is as follows. Downstream effector of TOR signaling pathway involved in osmotic stress response. Could be involved in the control of plant growth and development. Phosphorylates the ribosomal proteins P14, P16 and S6. Functions as a repressor of cell proliferation and required for maintenance of chromosome stability and ploidy levels through the RBR1-E2F pathway. Mediates the phosphorylation of MRFs (e.g. MRF1). The sequence is that of Serine/threonine-protein kinase AtPK1/AtPK6 from Arabidopsis thaliana (Mouse-ear cress).